The chain runs to 475 residues: Bifunctional protein HldE (475 aa).

The segment at 1 to 321 (MADKIDISLY…RALHQITASH (321 aa)) is ribokinase. 197–200 (NLKE) lines the ATP pocket. The active site involves Asp-266. The cytidylyltransferase stretch occupies residues 346–475 (MTNGCFDILH…TSRLVEKMLN (130 aa)).

In the N-terminal section; belongs to the carbohydrate kinase PfkB family. This sequence in the C-terminal section; belongs to the cytidylyltransferase family. In terms of assembly, homodimer.

It catalyses the reaction D-glycero-beta-D-manno-heptose 7-phosphate + ATP = D-glycero-beta-D-manno-heptose 1,7-bisphosphate + ADP + H(+). It carries out the reaction D-glycero-beta-D-manno-heptose 1-phosphate + ATP + H(+) = ADP-D-glycero-beta-D-manno-heptose + diphosphate. Its pathway is nucleotide-sugar biosynthesis; ADP-L-glycero-beta-D-manno-heptose biosynthesis; ADP-L-glycero-beta-D-manno-heptose from D-glycero-beta-D-manno-heptose 7-phosphate: step 1/4. The protein operates within nucleotide-sugar biosynthesis; ADP-L-glycero-beta-D-manno-heptose biosynthesis; ADP-L-glycero-beta-D-manno-heptose from D-glycero-beta-D-manno-heptose 7-phosphate: step 3/4. Catalyzes the phosphorylation of D-glycero-D-manno-heptose 7-phosphate at the C-1 position to selectively form D-glycero-beta-D-manno-heptose-1,7-bisphosphate. Its function is as follows. Catalyzes the ADP transfer from ATP to D-glycero-beta-D-manno-heptose 1-phosphate, yielding ADP-D-glycero-beta-D-manno-heptose. The protein is Bifunctional protein HldE of Coxiella burnetii (strain Dugway 5J108-111).